Consider the following 88-residue polypeptide: Co-chaperonin GroES (88 aa).

This sequence belongs to the GroES chaperonin family. In terms of assembly, heptamer of 7 subunits arranged in a ring. Interacts with the chaperonin GroEL.

It is found in the cytoplasm. Its function is as follows. Together with the chaperonin GroEL, plays an essential role in assisting protein folding. The GroEL-GroES system forms a nano-cage that allows encapsulation of the non-native substrate proteins and provides a physical environment optimized to promote and accelerate protein folding. GroES binds to the apical surface of the GroEL ring, thereby capping the opening of the GroEL channel. This chain is Co-chaperonin GroES, found in Treponema pallidum (strain Nichols).